Consider the following 358-residue polypeptide: Histamine H2 receptor (358 aa).

Topologically, residues 1 to 22 are extracellular; it reads MEPNGTVHSCCLDSMALKVTIS. Asparagine 4 carries N-linked (GlcNAc...) asparagine glycosylation. Residues 23-44 form a helical membrane-spanning segment; sequence VVLTTLILITIAGNVVVCLAVS. Residues 45-57 are Cytoplasmic-facing; the sequence is LNRRLRSLTNCFI. A helical membrane pass occupies residues 58-81; that stretch reads VSLAATDLLLGLLVLPFSAIYQLS. Topologically, residues 82–92 are extracellular; that stretch reads FTWSFGHVFCN. Cysteine 91 and cysteine 173 are disulfide-bonded. Residues 93–114 form a helical membrane-spanning segment; the sequence is IYTSLDVMLCTASILNLFMISL. Over 115 to 134 the chain is Cytoplasmic; the sequence is DRYCAVTDPLRYPVLVTPVR. The helical transmembrane segment at 135–159 threads the bilayer; sequence VAISLVFIWVISITLSFLSIHLGWN. The Extracellular portion of the chain corresponds to 160-179; sequence SRNGTRGGNDTFKCKVQVNE. A helical transmembrane segment spans residues 180 to 203; the sequence is VYGLVDGLVTFYLPLLIMCVTYYR. Topologically, residues 204–233 are cytoplasmic; the sequence is IFKIAREQAKRINHISSWKAATIREHKATV. Residues 234-257 form a helical membrane-spanning segment; that stretch reads TLAAVMGAFIICWFPYFTAFVYRG. Over 258–266 the chain is Extracellular; sequence LRGDDAINE. A helical transmembrane segment spans residues 267–288; that stretch reads AVEGIVLWLGYANSALNPILYA. At 289 to 358 the chain is on the cytoplasmic side; it reads ALNRDFRTAY…LTHPQGNPIR (70 aa). Cysteine 304 carries the S-palmitoyl cysteine lipid modification.

Belongs to the G-protein coupled receptor 1 family.

The protein resides in the cell membrane. The H2 subclass of histamine receptors mediates gastric acid secretion. The activity of this receptor is mediated by G proteins which activate adenylyl cyclase. This chain is Histamine H2 receptor (Hrh2), found in Rattus norvegicus (Rat).